The sequence spans 223 residues: Cytidylate kinase (223 aa).

10 to 18 (GPASSGKST) contributes to the ATP binding site.

It belongs to the cytidylate kinase family. Type 1 subfamily.

The protein localises to the cytoplasm. It carries out the reaction CMP + ATP = CDP + ADP. The catalysed reaction is dCMP + ATP = dCDP + ADP. The sequence is that of Cytidylate kinase from Streptococcus pneumoniae (strain 70585).